We begin with the raw amino-acid sequence, 476 residues long: Protein transport protein Sec61 subunit alpha (476 aa).

Residues 2–33 (GIKFLEVIKPFCAVLPEIQKPERKIQFREKVL) lie on the Cytoplasmic side of the membrane. A helical transmembrane segment spans residues 34-53 (WTAITLFIFLVCCQIPLFGI). At 54-76 (MSSDSADPFYWMRVILASNRGTL) the chain is on the lumenal side. Residues 77–96 (MELGISPIVTSDLIMQLLAG) form a helical membrane-spanning segment. At 97–117 (AKIIEVGDSPKDRALFNGAQK) the chain is on the cytoplasmic side. A helical membrane pass occupies residues 118–138 (LFGMIITIGQAIVYVMTGMYG). Topologically, residues 139–144 (DPSEMG) are lumenal. Residues 145–165 (AGICLVIIIQLFVAGLIVLLL) traverse the membrane as a helical segment. Topologically, residues 166–172 (DELLQKG) are cytoplasmic. Residues 173–193 (YGLGSGISLLIATNICETIVW) form a helical membrane-spanning segment. At 194–240 (KAFSPTTVNTGRGTEFEGAIIALFHLLATRTDKVRALREAFYRQNLP) the chain is on the lumenal side. Residues 241-261 (NLMNLIATVFVFAVVIYFQGF) traverse the membrane as a helical segment. The Cytoplasmic portion of the chain corresponds to 262–288 (RVDLPIKSARYRGQYNTYPIKLFYTSN). The helical transmembrane segment at 289–309 (IPIILQSALVSNLYVISQMLS) threads the bilayer. Residues 310 to 354 (TRFSGNFIVNLLGTWSDTSTGGPARAYPVGGLCYFLSPPESFGSV) are Lumenal-facing. Residues 355-375 (LDDPVHAAIYIVFMLGSCAFF) form a helical membrane-spanning segment. The Cytoplasmic portion of the chain corresponds to 376 to 420 (SKTWIEVSGSSAKDVAKQLKEQQMVMRGHRETSMVHELNRYIPTA). The helical transmembrane segment at 421 to 441 (AAFGGLCIGGLSVMADFLGAI) threads the bilayer. At 442-445 (GSGT) the chain is on the lumenal side. Residues 446–462 (GILLAVTIIYQYFEIFV) traverse the membrane as a helical segment. The Cytoplasmic segment spans residues 463 to 476 (KEQSEMGSMGGLFF).

Belongs to the SecY/SEC61-alpha family. As to quaternary structure, the SEC61 channel-forming translocon complex consists of channel-forming core components SEC61A1, SEC61B and SEC61G and different auxiliary components such as SEC62 and SEC63. The SEC61 channel associates with the multi-pass translocon (MPT) complex.

The protein localises to the endoplasmic reticulum membrane. In terms of biological role, component of SEC61 channel-forming translocon complex that mediates transport of signal peptide-containing precursor polypeptides across the endoplasmic reticulum (ER). Forms a ribosome receptor and a gated pore in the ER membrane, both functions required for cotranslational translocation of nascent polypeptides. May cooperate with auxiliary protein SEC62, SEC63 and HSPA5/BiP to enable post-translational transport of small presecretory proteins. The SEC61 channel is also involved in ER membrane insertion of transmembrane proteins: it mediates membrane insertion of the first few transmembrane segments of proteins, while insertion of subsequent transmembrane regions of multi-pass membrane proteins is mediated by the multi-pass translocon (MPT) complex. The sequence is that of Protein transport protein Sec61 subunit alpha (sec61a) from Boreogadus saida (Polar cod).